Reading from the N-terminus, the 444-residue chain is S-locus-specific glycoprotein (444 aa).

A signal peptide spans 1-28 (MRGVIPNYHHSYTLFFFVILVLFPHVFS). In terms of domain architecture, Bulb-type lectin spans 31-159 (TLSPNEALTI…KTNDLDRFMW (129 aa)). Residues Asn-43, Asn-125, Asn-243, and Asn-396 are each glycosylated (N-linked (GlcNAc...) asparagine). Residues 356–437 (CGEGDGFLRM…GGQDLYVKVA (82 aa)) form the PAN domain. Disulfide bonds link Cys-387–Cys-412 and Cys-395–Cys-397.

As to expression, stigma.

Functionally, involved in sporophytic self-incompatibility system (the inability of flowering plants to achieve self-fertilization). In Brassica oleracea var. alboglabra (Chinese kale), this protein is S-locus-specific glycoprotein (SLSG).